Consider the following 597-residue polypeptide: Aspartate--tRNA(Asp/Asn) ligase (597 aa).

Glutamate 182 serves as a coordination point for L-aspartate. The tract at residues glutamine 206 to lysine 209 is aspartate. Arginine 228 contacts L-aspartate. Residues arginine 228–glutamate 230 and glutamine 237 each bind ATP. Residue histidine 455 coordinates L-aspartate. Residue glutamate 489 participates in ATP binding. Position 496 (arginine 496) interacts with L-aspartate. Residue glycine 541–arginine 544 participates in ATP binding.

It belongs to the class-II aminoacyl-tRNA synthetase family. Type 1 subfamily. In terms of assembly, homodimer.

It localises to the cytoplasm. It carries out the reaction tRNA(Asx) + L-aspartate + ATP = L-aspartyl-tRNA(Asx) + AMP + diphosphate. In terms of biological role, aspartyl-tRNA synthetase with relaxed tRNA specificity since it is able to aspartylate not only its cognate tRNA(Asp) but also tRNA(Asn). Reaction proceeds in two steps: L-aspartate is first activated by ATP to form Asp-AMP and then transferred to the acceptor end of tRNA(Asp/Asn). In Desulfosudis oleivorans (strain DSM 6200 / JCM 39069 / Hxd3) (Desulfococcus oleovorans), this protein is Aspartate--tRNA(Asp/Asn) ligase.